A 707-amino-acid polypeptide reads, in one-letter code: Acyl-CoA ligase 891, peroxisomal (707 aa).

Isoleucine 259–lysine 270 is a binding site for ATP. The fatty acid-binding stretch occupies residues aspartate 525–lysine 549. The Peroxisome targeting signal motif lies at alanine 705 to leucine 707.

It belongs to the ATP-dependent AMP-binding enzyme family.

It is found in the peroxisome matrix. The catalysed reaction is (4E,8E)-10-(4-hydroxy-6-methoxy-7-methyl-3-oxo-1,3-dihydro-2-benzofuran-5-yl)-4,8-dimethyldeca-4,8-dienoate + ATP + CoA = (4E,8E)-10-(4-hydroxy-6-methoxy-7-methyl-3-oxo-1,3-dihydro-2-benzofuran-5-yl)-4,8-dimethyldeca-4,8-dienoyl-CoA + AMP + diphosphate. The protein operates within secondary metabolite biosynthesis; terpenoid biosynthesis. In terms of biological role, acyl-CoA ligase involved in the biosynthesis of mycophenolic acid (MPA), the first isolated antibiotic natural product in the world obtained from a culture of Penicillium brevicompactum in 1893. The peroxisomal acyl-CoA ligase 891 converts the intermediate MFDHMP-3C into MFDHMP-3C-CoA which impairs its diffusion from the peroxisome. The first step of the pathway is the synthesis of 5-methylorsellinic acid (5MOA) by the cytosolic polyketide synthase mpaC. 5MOA is then converted to the phthalide compound 5,7-dihydroxy-4,6-dimethylphthalide (DHMP) by the endoplasmic reticulum-bound cytochrome P450 monooxygenase mpaDE. MpaDE first catalyzes hydroxylation of 5-MOA to 4,6-dihydroxy-2-(hydroxymethyl)-3-methylbenzoic acid (DHMB). MpaDE then acts as a lactone synthase that catalyzes the ring closure to convert DHMB into DHMP. The next step is the prenylation of DHMP by the Golgi apparatus-associated prenyltransferase mpaA to yield farnesyl-DHMP (FDHMP). The ER-bound oxygenase mpaB then mediates the oxidative cleavage the C19-C20 double bond in FDHMP to yield FDHMP-3C via a mycophenolic aldehyde intermediate. The O-methyltransferase mpaG catalyzes the methylation of FDHMP-3C to yield MFDHMP-3C. After the cytosolic methylation of FDHMP-3C, MFDHMP-3C enters into peroxisomes probably via free diffusion due to its low molecular weight. Upon a peroxisomal CoA ligation reaction, catalyzed by a beta-oxidation component enzyme acyl-CoA ligase ACL891, MFDHMP-3C-CoA would then be restricted to peroxisomes for the following beta-oxidation pathway steps. The peroxisomal beta-oxidation machinery than converts MFDHMP-3C-CoA into MPA_CoA, via a beta-oxidation chain-shortening process. Finally mpaH acts as a peroxisomal acyl-CoA hydrolase with high substrate specificity toward MPA-CoA to release the final product MPA. This chain is Acyl-CoA ligase 891, peroxisomal, found in Penicillium brevicompactum.